Consider the following 321-residue polypeptide: tRNA U34 carboxymethyltransferase (321 aa).

Carboxy-S-adenosyl-L-methionine-binding positions include Lys-90, Trp-104, Lys-109, Gly-129, 151–153 (DPT), 180–181 (IE), Met-195, Tyr-199, and Arg-314.

This sequence belongs to the class I-like SAM-binding methyltransferase superfamily. CmoB family. Homotetramer.

It carries out the reaction carboxy-S-adenosyl-L-methionine + 5-hydroxyuridine(34) in tRNA = 5-carboxymethoxyuridine(34) in tRNA + S-adenosyl-L-homocysteine + H(+). In terms of biological role, catalyzes carboxymethyl transfer from carboxy-S-adenosyl-L-methionine (Cx-SAM) to 5-hydroxyuridine (ho5U) to form 5-carboxymethoxyuridine (cmo5U) at position 34 in tRNAs. The chain is tRNA U34 carboxymethyltransferase from Haemophilus influenzae (strain ATCC 51907 / DSM 11121 / KW20 / Rd).